A 318-amino-acid chain; its full sequence is MANTLEQLKAFTTIVADTGDIEAIKRYQPEDATTNPSLILKASEIPEYSALIENAIDWAKSQSDVLAQQIEDAGDKLAVNIGLEILKIVPGRISTEVDARLSFDKEGSIAKAHKLIKLYQEAGIDKSRILIKLASTWEGICAAKQLEQEGINCNLTLLFSFAQARACAEAGVYLISPFVGRILDWYKKDTGLEYSATDDPGVVSVTSIYDYYKRHGFNTVVMGASFRNTGEIIELAGCDRLTIGPALLEELQNSTTPIVQKLLPATEVVAPEAEMTEAQFRWEFNEDPMAVEKLAEGIRNFAIDQGKLEVMLKEKLSS.

Catalysis depends on Lys132, which acts as the Schiff-base intermediate with substrate.

This sequence belongs to the transaldolase family. Type 1 subfamily. Homodimer.

The protein localises to the cytoplasm. The enzyme catalyses D-sedoheptulose 7-phosphate + D-glyceraldehyde 3-phosphate = D-erythrose 4-phosphate + beta-D-fructose 6-phosphate. It participates in carbohydrate degradation; pentose phosphate pathway; D-glyceraldehyde 3-phosphate and beta-D-fructose 6-phosphate from D-ribose 5-phosphate and D-xylulose 5-phosphate (non-oxidative stage): step 2/3. Transaldolase is important for the balance of metabolites in the pentose-phosphate pathway. The chain is Transaldolase from Shewanella pealeana (strain ATCC 700345 / ANG-SQ1).